Consider the following 198-residue polypeptide: Probable GTP-binding protein EngB (198 aa).

An EngB-type G domain is found at 36 to 198; that stretch reads SEPQFAFIGR…NLSKLQELLE (163 aa). GTP contacts are provided by residues 44 to 51, 70 to 74, 88 to 91, 155 to 158, and 182 to 184; these read GRSNVGKS, GRTQL, DLPG, NKID, and ISA. Mg(2+)-binding residues include Ser51 and Thr72.

Belongs to the TRAFAC class TrmE-Era-EngA-EngB-Septin-like GTPase superfamily. EngB GTPase family. Requires Mg(2+) as cofactor.

Its function is as follows. Necessary for normal cell division and for the maintenance of normal septation. This chain is Probable GTP-binding protein EngB, found in Mesomycoplasma hyopneumoniae (strain 232) (Mycoplasma hyopneumoniae).